The primary structure comprises 432 residues: Sensor histidine kinase YrkQ (432 aa).

Topologically, residues 1-12 are cytoplasmic; the sequence is MAHLKFTLTKKL. Residues 13 to 33 form a helical membrane-spanning segment; that stretch reads ALLIMVAAIVSGVIFLTLQKI. Over 34 to 145 the chain is Extracellular; it reads TDDLIEGYLS…GFYSSRYYDL (112 aa). The chain crosses the membrane as a helical span at residues 146–166; the sequence is AFALDLLGATLIFLIIVLFGI. The HAMP domain maps to 167–219; the sequence is RQSLRYLKTIHQEIHILEGGELDYEMTIKGHDELAMIAKSIEDLRKAFLDKLK. At 167–432 the chain is on the cytoplasmic side; that stretch reads RQSLRYLKTI…IVLRFWNTKM (266 aa). Residues 234–432 form the Histidine kinase domain; sequence EMSHDMRTPL…IVLRFWNTKM (199 aa). A Phosphohistidine; by autocatalysis modification is found at H237.

It is found in the cell membrane. The enzyme catalyses ATP + protein L-histidine = ADP + protein N-phospho-L-histidine.. Its function is as follows. Member of the two-component regulatory system YrkQ/YrkP. Probably activates YrkP by phosphorylation. This Bacillus subtilis (strain 168) protein is Sensor histidine kinase YrkQ (yrkQ).